The chain runs to 608 residues: Membrane protein insertase YidC (608 aa).

A helical transmembrane segment spans residues 8–28; the sequence is LLLATALSFLVILGWYFFFPP. Positions 33–61 are disordered; that stretch reads PQPATEVTETAPQGDTTAPAAAPSAGAAT. 5 helical membrane passes run 378-398, 448-468, 482-502, 506-526, and 542-562; these read MGVA…PLAY, LPIL…FVTL, LSVP…WAAP, SLLS…SMWV, and IFAW…SGLV.

Belongs to the OXA1/ALB3/YidC family. Type 1 subfamily. In terms of assembly, interacts with the Sec translocase complex via SecD. Specifically interacts with transmembrane segments of nascent integral membrane proteins during membrane integration.

Its subcellular location is the cell inner membrane. Its function is as follows. Required for the insertion and/or proper folding and/or complex formation of integral membrane proteins into the membrane. Involved in integration of membrane proteins that insert both dependently and independently of the Sec translocase complex, as well as at least some lipoproteins. Aids folding of multispanning membrane proteins. The sequence is that of Membrane protein insertase YidC from Ruegeria sp. (strain TM1040) (Silicibacter sp.).